The chain runs to 762 residues: Endonuclease MutS2 (762 aa).

ATP is bound at residue 329 to 336 (GPNTGGKT). Positions 682-757 (LNLIGKDVET…GSGVTVVYLE (76 aa)) constitute a Smr domain.

This sequence belongs to the DNA mismatch repair MutS family. MutS2 subfamily. Homodimer. Binds to stalled ribosomes, contacting rRNA.

Functionally, endonuclease that is involved in the suppression of homologous recombination and thus may have a key role in the control of bacterial genetic diversity. Acts as a ribosome collision sensor, splitting the ribosome into its 2 subunits. Detects stalled/collided 70S ribosomes which it binds and splits by an ATP-hydrolysis driven conformational change. Acts upstream of the ribosome quality control system (RQC), a ribosome-associated complex that mediates the extraction of incompletely synthesized nascent chains from stalled ribosomes and their subsequent degradation. Probably generates substrates for RQC. In Aquifex aeolicus (strain VF5), this protein is Endonuclease MutS2.